The chain runs to 211 residues: MKQELKIPQATTKRLPLYYRFIQNFAQEGMERISSKELSEAMKIDSATIRRDFSYFGALGKKGYGYDVQHLLQFFSQTLDQHETTKVALIGVGNLGSALLKYNFQKNHNTHIVVAFDSKAPKDGKMISNIPVFHPDLLEEKYAEYGAELAILTVSPRSAQKMADRLAAMNAKGILNFTPERLTVPDSMQLLTIDLSVELQALIYLIRNQEV.

A DNA-binding region (H-T-H motif) is located at residues 17–56 (LYYRFIQNFAQEGMERISSKELSEAMKIDSATIRRDFSYF). 91–96 (GVGNLG) lines the NAD(+) pocket.

This sequence belongs to the transcriptional regulatory Rex family. Homodimer.

The protein localises to the cytoplasm. In terms of biological role, modulates transcription in response to changes in cellular NADH/NAD(+) redox state. This Lysinibacillus sphaericus (strain C3-41) protein is Redox-sensing transcriptional repressor Rex.